Consider the following 346-residue polypeptide: GTP 3',8-cyclase (346 aa).

One can recognise a Radical SAM core domain in the interval 10–240 (QRSRPLRVLR…VTRIRARWPL (231 aa)). Residue arginine 19 participates in GTP binding. Positions 26 and 30 each coordinate [4Fe-4S] cluster. S-adenosyl-L-methionine is bound at residue tyrosine 32. Position 33 (cysteine 33) interacts with [4Fe-4S] cluster. Arginine 65 contributes to the GTP binding site. Glycine 69 contributes to the S-adenosyl-L-methionine binding site. A GTP-binding site is contributed by threonine 104. Serine 129 is a binding site for S-adenosyl-L-methionine. Lysine 177 is a binding site for GTP. Methionine 211 serves as a coordination point for S-adenosyl-L-methionine. The [4Fe-4S] cluster site is built by cysteine 274 and cysteine 277. 279-281 (RLR) serves as a coordination point for GTP. Residue cysteine 291 coordinates [4Fe-4S] cluster. The interval 326 to 346 (SDERQQTTGSMPHAEMAYLGG) is disordered.

It belongs to the radical SAM superfamily. MoaA family. Monomer and homodimer. Requires [4Fe-4S] cluster as cofactor.

The enzyme catalyses GTP + AH2 + S-adenosyl-L-methionine = (8S)-3',8-cyclo-7,8-dihydroguanosine 5'-triphosphate + 5'-deoxyadenosine + L-methionine + A + H(+). The protein operates within cofactor biosynthesis; molybdopterin biosynthesis. In terms of biological role, catalyzes the cyclization of GTP to (8S)-3',8-cyclo-7,8-dihydroguanosine 5'-triphosphate. The polypeptide is GTP 3',8-cyclase (Parasynechococcus marenigrum (strain WH8102)).